A 112-amino-acid chain; its full sequence is Small ribosomal subunit protein bS6 (112 aa).

The protein belongs to the bacterial ribosomal protein bS6 family.

Binds together with bS18 to 16S ribosomal RNA. The chain is Small ribosomal subunit protein bS6 from Christiangramia forsetii (strain DSM 17595 / CGMCC 1.15422 / KT0803) (Gramella forsetii).